Reading from the N-terminus, the 223-residue chain is MIF4G domain-containing protein A (223 aa).

The MIF4G domain occupies 7–206; sequence QEDYKMQAFD…LEMIEYRAAG (200 aa).

The protein belongs to the MIF4GD family. Interacts with eif4g1, eif4g2 and slbp; probably tethered by SLBP to the 3'-end of mRNAs ending with the histone stem-loop, it also interacts with eif4g1 which is bound to their 5'-end.

It localises to the cytoplasm. Its subcellular location is the nucleus. Its function is as follows. Functions in replication-dependent translation of histone mRNAs which differ from other eukaryotic mRNAs in that they do not end with a poly-A tail but a stem-loop. May participate in circularizing those mRNAs specifically enhancing their translation. The polypeptide is MIF4G domain-containing protein A (mif4gd-a) (Xenopus laevis (African clawed frog)).